The primary structure comprises 1187 residues: ATP-dependent DNA helicase MPH1 (1187 aa).

Residues 144-311 (IVERAFYDNL…QIIDNLNISK (168 aa)) enclose the Helicase ATP-binding domain. 157–164 (LPTGLGKT) contributes to the ATP binding site. The short motif at 259–262 (DEAH) is the DEAH box element. Residues 486-681 (ELDDFFKNHE…FIQLRPQHRM (196 aa)) form the Helicase C-terminal domain. Disordered stretches follow at residues 542-576 (VENFGKKKQKGQTKKKKDERPSTRSSSENAQMTGM), 781-848 (DKLV…NNQV), and 941-1003 (PEKP…LGVK). A compositionally biased stretch (basic residues) spans 547–556 (KKKQKGQTKK). Positions 564–576 (TRSSSENAQMTGM) are enriched in polar residues. The span at 781-817 (DKLVDSDSESEVDKENENVIQEVDKSKNQEQNDHIIT) shows a compositional bias: basic and acidic residues. Residues 822-848 (TEQSVAGNTKSTTNGTSYSEPENNNQV) show a composition bias toward polar residues. Residues 967–977 (SNSISIPSSTT) are compositionally biased toward low complexity. The segment covering 980 to 989 (SHNEVTRKVV) has biased composition (basic and acidic residues).

It belongs to the DEAD box helicase family. DEAH subfamily. FANCM sub-subfamily. As to quaternary structure, interacts with the MHF histone-fold complex to form the FANCM-MHF complex.

The protein resides in the nucleus. The catalysed reaction is ATP + H2O = ADP + phosphate + H(+). In terms of biological role, ATP-dependent DNA helicase involved in DNA damage repair by homologous recombination and in genome maintenance. Capable of unwinding D-loops. Plays a role in limiting crossover recombinants during mitotic DNA double-strand break (DSB) repair. Component of a FANCM-MHF complex which promotes gene conversion at blocked replication forks, probably by reversal of the stalled fork. This is ATP-dependent DNA helicase MPH1 from Candida albicans (strain SC5314 / ATCC MYA-2876) (Yeast).